The primary structure comprises 431 residues: Gamma-glutamyl phosphate reductase (431 aa).

It belongs to the gamma-glutamyl phosphate reductase family.

Its subcellular location is the cytoplasm. It catalyses the reaction L-glutamate 5-semialdehyde + phosphate + NADP(+) = L-glutamyl 5-phosphate + NADPH + H(+). Its pathway is amino-acid biosynthesis; L-proline biosynthesis; L-glutamate 5-semialdehyde from L-glutamate: step 2/2. Functionally, catalyzes the NADPH-dependent reduction of L-glutamate 5-phosphate into L-glutamate 5-semialdehyde and phosphate. The product spontaneously undergoes cyclization to form 1-pyrroline-5-carboxylate. This is Gamma-glutamyl phosphate reductase from Synechococcus elongatus (strain ATCC 33912 / PCC 7942 / FACHB-805) (Anacystis nidulans R2).